Consider the following 402-residue polypeptide: MFTYITSLPSPEWEKSFPRTISILGSTGSIGTNALDVIKSHKELFHIVALGGGKNVQLLAKQAIQWKPDYLAVQDETSKEALIPLLPINYKPSIFVGQQGYVKLASLPEVTTVLSAQVGAAGLHGTVAAAKNGKVICLANKETLVLAGKLIKNLCLQSGAVILPVDSEHNAIFQALYTRNPKTVQNIILTASGGPFRNKKYEFLKNVTPEQAINHPNWKMGTKISVDSATMINKGLEIIEAHYLYGLPSEQIKIVVHPQSYVHSLVEFTDHSLMAHLGTADMRMPIAHCLAWPNYLNVGVEPFVLSKIGTLTFEEPDLDSFPCINLARDALVAGTSAQIILNAANEVAVDAFLKKQIGFMDIPILISKALEADSTPEPTTLESIEALDQQTRHTISQWIEVH.

NADPH is bound by residues threonine 27, glycine 28, serine 29, isoleucine 30, glycine 53, lysine 54, asparagine 55, and asparagine 140. Lysine 141 lines the 1-deoxy-D-xylulose 5-phosphate pocket. Glutamate 142 is an NADPH binding site. Aspartate 166 serves as a coordination point for Mn(2+). 1-deoxy-D-xylulose 5-phosphate is bound by residues serine 167, glutamate 168, serine 192, and histidine 215. Residue glutamate 168 coordinates Mn(2+). Glycine 221 is an NADPH binding site. 1-deoxy-D-xylulose 5-phosphate is bound by residues serine 228, asparagine 233, lysine 234, and glutamate 237. Residue glutamate 237 coordinates Mn(2+).

This sequence belongs to the DXR family. Mg(2+) serves as cofactor. The cofactor is Mn(2+).

The catalysed reaction is 2-C-methyl-D-erythritol 4-phosphate + NADP(+) = 1-deoxy-D-xylulose 5-phosphate + NADPH + H(+). It participates in isoprenoid biosynthesis; isopentenyl diphosphate biosynthesis via DXP pathway; isopentenyl diphosphate from 1-deoxy-D-xylulose 5-phosphate: step 1/6. Functionally, catalyzes the NADPH-dependent rearrangement and reduction of 1-deoxy-D-xylulose-5-phosphate (DXP) to 2-C-methyl-D-erythritol 4-phosphate (MEP). This chain is 1-deoxy-D-xylulose 5-phosphate reductoisomerase, found in Lawsonia intracellularis (strain PHE/MN1-00).